The primary structure comprises 844 residues: Lysine-specific histone demethylase 1 homolog 1 (844 aa).

The span at 1–18 (MSTETKETRPETKPEDLG) shows a compositional bias: basic and acidic residues. Residues 1–131 (MSTETKETRP…PGPRARKRRR (131 aa)) form a disordered region. Acidic residues predominate over residues 26-40 (PGEEPLGELIADDVN). Polar residues-rich tracts occupy residues 46–62 (ASAT…QSEQ) and 107–118 (DLVTEQQSQNPN). Residues 154–255 (GKEVDSEALI…FGLAPVIKEA (102 aa)) enclose the SWIRM domain. Glu-295, Arg-297, and Arg-303 together coordinate FAD. The Nuclear localization signal motif lies at 516–523 (LKKGSIEF). Glu-679 lines the FAD pocket.

It belongs to the flavin monoamine oxidase family. As to quaternary structure, interacts with CZS. Interacts with OTU6/OTLD1. FAD serves as cofactor. Expressed in the shoot and root apical regions of young seedlings. Expressed in cotyledons and inflorescences.

The protein localises to the nucleus. The protein resides in the cytoplasm. Functionally, probable histone demethylase that reduces the levels of histone H3 'Lys-4' methylation in chromatin of the floral repressor FLOWERING LOCUS C (FLC) and the sporophytically silenced floral repressor FWA. Seems to act in partial redundancy with FLOWERING LOCUS D (FLD) to repress FLC expression. Required for cytosine methylation of FWA. Controls primary seed dormancy by regulating DOG1 and abscisic acid signaling-related genes. In association with OTU6/OTLD1, involved in transcriptional gene repression via histone deubiquitination and demethylation. This chain is Lysine-specific histone demethylase 1 homolog 1, found in Arabidopsis thaliana (Mouse-ear cress).